Reading from the N-terminus, the 364-residue chain is MNVLFAGGGTGGHLYPAVAMAVELLKLVPGASVSFAGTKNGIEASEIPRLGYRLHLLPVRGLKRGGSLRAILANVGILIDFAGALINAGGLIRRENPDVVVGTGGFVSAPVLLAAQMMGRRTLIQEQNAFPGVTTKLLSILASEIHLSFSEAQQYIRRNKGVFVSGNPARSFTLNSREKAQEHFGLQQQLPTLLVFGGSRGARSINSAVLKWIDAITERANLVWQTGALDYDRIRQQVKHSGRLWIGPYIEQMGDAYSASDLVMCRAGASSIAELTNTGKPSVLVPYPYATGDHQRYNAQALVGTGAAMLIDDSHLDAPEAQQIVLDLLHDPHRLSAMGASCGRLAHPDAALQLARRIIQLAKP.

UDP-N-acetyl-alpha-D-glucosamine-binding positions include 10-12 (TGG), asparagine 128, arginine 170, serine 199, isoleucine 250, and glutamine 295.

Belongs to the glycosyltransferase 28 family. MurG subfamily.

It is found in the cell inner membrane. The catalysed reaction is di-trans,octa-cis-undecaprenyl diphospho-N-acetyl-alpha-D-muramoyl-L-alanyl-D-glutamyl-meso-2,6-diaminopimeloyl-D-alanyl-D-alanine + UDP-N-acetyl-alpha-D-glucosamine = di-trans,octa-cis-undecaprenyl diphospho-[N-acetyl-alpha-D-glucosaminyl-(1-&gt;4)]-N-acetyl-alpha-D-muramoyl-L-alanyl-D-glutamyl-meso-2,6-diaminopimeloyl-D-alanyl-D-alanine + UDP + H(+). It functions in the pathway cell wall biogenesis; peptidoglycan biosynthesis. In terms of biological role, cell wall formation. Catalyzes the transfer of a GlcNAc subunit on undecaprenyl-pyrophosphoryl-MurNAc-pentapeptide (lipid intermediate I) to form undecaprenyl-pyrophosphoryl-MurNAc-(pentapeptide)GlcNAc (lipid intermediate II). The protein is UDP-N-acetylglucosamine--N-acetylmuramyl-(pentapeptide) pyrophosphoryl-undecaprenol N-acetylglucosamine transferase of Chlorobium limicola (strain DSM 245 / NBRC 103803 / 6330).